A 175-amino-acid chain; its full sequence is Protein her-1 (175 aa).

The N-terminal stretch at 1–18 (MRYLPIFVFLGSFGYTET) is a signal peptide. Residues N98 and N163 are each glycosylated (N-linked (GlcNAc...) asparagine).

The protein localises to the secreted. Dictates male development. Probably plays a direct role in cell signaling during C.elegans sex determination. Inhibits the function of tra-2a. In Caenorhabditis elegans, this protein is Protein her-1 (her-1).